The chain runs to 253 residues: 4-hydroxy-tetrahydrodipicolinate reductase (253 aa).

16–21 (GDTGRM) is a binding site for NAD(+). R44 serves as a coordination point for NADP(+). NAD(+) contacts are provided by residues 85–87 (GTT) and 111–114 (CANT). H144 (proton donor/acceptor) is an active-site residue. H145 is a (S)-2,3,4,5-tetrahydrodipicolinate binding site. K148 serves as the catalytic Proton donor. 154–155 (GT) contacts (S)-2,3,4,5-tetrahydrodipicolinate.

The protein belongs to the DapB family.

The protein localises to the cytoplasm. The catalysed reaction is (S)-2,3,4,5-tetrahydrodipicolinate + NAD(+) + H2O = (2S,4S)-4-hydroxy-2,3,4,5-tetrahydrodipicolinate + NADH + H(+). It catalyses the reaction (S)-2,3,4,5-tetrahydrodipicolinate + NADP(+) + H2O = (2S,4S)-4-hydroxy-2,3,4,5-tetrahydrodipicolinate + NADPH + H(+). It functions in the pathway amino-acid biosynthesis; L-lysine biosynthesis via DAP pathway; (S)-tetrahydrodipicolinate from L-aspartate: step 4/4. Its function is as follows. Catalyzes the conversion of 4-hydroxy-tetrahydrodipicolinate (HTPA) to tetrahydrodipicolinate. This Chlamydia trachomatis serovar A (strain ATCC VR-571B / DSM 19440 / HAR-13) protein is 4-hydroxy-tetrahydrodipicolinate reductase.